The chain runs to 116 residues: Large ribosomal subunit protein bL19c (116 aa).

Belongs to the bacterial ribosomal protein bL19 family.

It localises to the plastid. Its subcellular location is the chloroplast. The sequence is that of Large ribosomal subunit protein bL19c from Cyanidium caldarium (Red alga).